Consider the following 456-residue polypeptide: DnaJ homolog dnj-10 (456 aa).

The 65-residue stretch at 44–108 (DYYKTLGVDK…TKRQEYDAYG (65 aa)) folds into the J domain. The CR-type zinc finger occupies 178 to 257 (GATKNVSVNV…CEGEGQTVQR (80 aa)). 3 CXXCXGXG motif repeats span residues 208–215 (CPYCNGTG), 231–238 (CNRCRGSG), and 245–252 (CQECEGEG). Positions 395–429 (KGLEKNQKTEEKETKKNEEKKSEGASESQKRRSEP) are enriched in basic and acidic residues. A disordered region spans residues 395–443 (KGLEKNQKTEEKETKKNEEKKSEGASESQKRRSEPVAENAETIDENQEN).

The chain is DnaJ homolog dnj-10 (dnj-10) from Caenorhabditis elegans.